Consider the following 227-residue polypeptide: PKHD-type hydroxylase Reut_B4660 (227 aa).

Positions K78 to S178 constitute a Fe2OG dioxygenase domain. Residues H96, D98, and H159 each coordinate Fe cation. R169 provides a ligand contact to 2-oxoglutarate.

Fe(2+) is required as a cofactor. Requires L-ascorbate as cofactor.

The sequence is that of PKHD-type hydroxylase Reut_B4660 from Cupriavidus pinatubonensis (strain JMP 134 / LMG 1197) (Cupriavidus necator (strain JMP 134)).